Reading from the N-terminus, the 767-residue chain is Cilia- and flagella-associated protein 91 (767 aa).

Positions 1–29 (MSHAVTIEEPQAQPQVSQTRYRERSRAGS) are disordered.

It belongs to the CFAP91 family. As to quaternary structure, interacts with MYCBP and AKAP1. Part of a complex containing MYCBP, AKAP1 and PRKAR2B. Interacts with CFAP61. Does not interact with MYCBP. Post-translationally, phosphorylated by PKA. Strongly expressed in the liver. In terms of tissue distribution, widely expressed, but strongly expressed in all spermatogenesis-related tissues, including the testis, the epithelium of cauda and the corpus epididymis, as well as the spermatid and mature sperm. Also expressed in Leydig cells.

The protein localises to the mitochondrion. The protein resides in the cytoplasm. Its subcellular location is the cytoskeleton. It is found in the cilium axoneme. Involved in sperm flagellum axonemal organization and function. May regulate cilium motility through its role in the assembly of the axonemal radial spokes. The chain is Cilia- and flagella-associated protein 91 from Homo sapiens (Human).